A 235-amino-acid chain; its full sequence is 1-(5-phosphoribosyl)-5-[(5-phosphoribosylamino)methylideneamino] imidazole-4-carboxamide isomerase (235 aa).

Asp-8 functions as the Proton acceptor in the catalytic mechanism. Asp-128 functions as the Proton donor in the catalytic mechanism.

It belongs to the HisA/HisF family.

Its subcellular location is the cytoplasm. It carries out the reaction 1-(5-phospho-beta-D-ribosyl)-5-[(5-phospho-beta-D-ribosylamino)methylideneamino]imidazole-4-carboxamide = 5-[(5-phospho-1-deoxy-D-ribulos-1-ylimino)methylamino]-1-(5-phospho-beta-D-ribosyl)imidazole-4-carboxamide. It functions in the pathway amino-acid biosynthesis; L-histidine biosynthesis; L-histidine from 5-phospho-alpha-D-ribose 1-diphosphate: step 4/9. The chain is 1-(5-phosphoribosyl)-5-[(5-phosphoribosylamino)methylideneamino] imidazole-4-carboxamide isomerase from Thermus thermophilus (strain ATCC BAA-163 / DSM 7039 / HB27).